The chain runs to 293 residues: Diaminopimelate epimerase (293 aa).

Residues Asn-17, Gln-47, and Asn-67 each coordinate substrate. The active-site Proton donor is the Cys-76. Residues 77-78 (GN), Asn-164, Asn-197, and 215-216 (ER) contribute to the substrate site. Cys-224 serves as the catalytic Proton acceptor. Residue 225–226 (GS) participates in substrate binding.

It belongs to the diaminopimelate epimerase family. As to quaternary structure, homodimer.

It is found in the cytoplasm. It catalyses the reaction (2S,6S)-2,6-diaminopimelate = meso-2,6-diaminopimelate. Its pathway is amino-acid biosynthesis; L-lysine biosynthesis via DAP pathway; DL-2,6-diaminopimelate from LL-2,6-diaminopimelate: step 1/1. Functionally, catalyzes the stereoinversion of LL-2,6-diaminopimelate (L,L-DAP) to meso-diaminopimelate (meso-DAP), a precursor of L-lysine and an essential component of the bacterial peptidoglycan. In Rhodopseudomonas palustris (strain BisB5), this protein is Diaminopimelate epimerase.